We begin with the raw amino-acid sequence, 395 residues long: Elongation factor Tu (395 aa).

The tr-type G domain occupies 10-204 (KPHVNIGTIG…NVDEYIPLPQ (195 aa)). Residues 19-26 (GHVDHGKT) are G1. Position 19–26 (19–26 (GHVDHGKT)) interacts with GTP. Position 26 (Thr-26) interacts with Mg(2+). The G2 stretch occupies residues 60–64 (GITIN). The G3 stretch occupies residues 81–84 (DCPG). GTP-binding positions include 81-85 (DCPGH) and 136-139 (NKVD). The G4 stretch occupies residues 136–139 (NKVD). Residues 174–176 (SAL) are G5.

The protein belongs to the TRAFAC class translation factor GTPase superfamily. Classic translation factor GTPase family. EF-Tu/EF-1A subfamily. As to quaternary structure, monomer.

Its subcellular location is the cytoplasm. The catalysed reaction is GTP + H2O = GDP + phosphate + H(+). In terms of biological role, GTP hydrolase that promotes the GTP-dependent binding of aminoacyl-tRNA to the A-site of ribosomes during protein biosynthesis. This Amoebophilus asiaticus (strain 5a2) protein is Elongation factor Tu.